The following is a 127-amino-acid chain: Lymphocyte antigen 6D (127 aa).

The first 20 residues, 1 to 20 (MKTALLVLLVLAVATSPAWA), serve as a signal peptide directing secretion. Residues 21–108 (LRCHVCTNSA…AAPGHALLSS (88 aa)) form the UPAR/Ly6 domain. 5 disulfide bridges follow: C23–C45, C26–C32, C38–C63, C67–C86, and C87–C92. Residue S98 is the site of GPI-anchor amidated serine attachment. The propeptide at 99–127 (AAPGHALLSSVTLGLATSLSLLTVMALCL) is removed in mature form.

In terms of tissue distribution, lymphoid cells lacking Ly6d, called ALP (all-lymphoid progenitor), retain full lymphoid potential and early thymic seeding activity, whereas cells containing Ly6d, called BLP (B-cell-biased lymphoid progenitor), up-regulate the B-cell specifying factors Ebf1 and Pax5 and behave essentially as B-cell progenitors (at protein level). Thymocytes and B-cells.

Its subcellular location is the cell membrane. Functionally, may act as a specification marker at earliest stage specification of lymphocytes between B- and T-cell development. Marks the earliest stage of B-cell specification. This Mus musculus (Mouse) protein is Lymphocyte antigen 6D (Ly6d).